A 177-amino-acid polypeptide reads, in one-letter code: Large ribosomal subunit protein uL5 (177 aa).

Belongs to the universal ribosomal protein uL5 family. As to quaternary structure, part of the 50S ribosomal subunit; part of the 5S rRNA/L5/L18/L25 subcomplex. Contacts the 5S rRNA and the P site tRNA. Forms a bridge to the 30S subunit in the 70S ribosome.

Its function is as follows. This is one of the proteins that bind and probably mediate the attachment of the 5S RNA into the large ribosomal subunit, where it forms part of the central protuberance. In the 70S ribosome it contacts protein S13 of the 30S subunit (bridge B1b), connecting the 2 subunits; this bridge is implicated in subunit movement. Contacts the P site tRNA; the 5S rRNA and some of its associated proteins might help stabilize positioning of ribosome-bound tRNAs. The polypeptide is Large ribosomal subunit protein uL5 (Anaplasma phagocytophilum (strain HZ)).